A 355-amino-acid polypeptide reads, in one-letter code: uncharacterized protein (355 aa).

The transit peptide at 1–49 (MPMTVVSGRFSTALLPTCFSLSRLHSVKYAAQRRVVFVSRSAHASSASV) directs the protein to the chloroplast.

It belongs to the methyltransferase superfamily.

It localises to the plastid. The protein resides in the chloroplast. Its subcellular location is the plastoglobule. This is an uncharacterized protein from Arabidopsis thaliana (Mouse-ear cress).